A 262-amino-acid chain; its full sequence is uncharacterized protein (262 aa).

An S4 RNA-binding domain is found at 6 to 70 (LRINQFLAHY…LKNKKFSVLV (65 aa)). The active-site Nucleophile is Asp108.

The protein belongs to the pseudouridine synthase RsuA family.

The enzyme catalyses a uridine in RNA = a pseudouridine in RNA. This is an uncharacterized protein from Helicobacter pylori (strain J99 / ATCC 700824) (Campylobacter pylori J99).